We begin with the raw amino-acid sequence, 215 residues long: LysM and putative peptidoglycan-binding domain-containing protein 1 (215 aa).

A LysM domain is found at L37–I81. Composition is skewed to polar residues over residues G86 to E103 and G173 to S189. Disordered regions lie at residues G86–F133 and A148–S203.

The chain is LysM and putative peptidoglycan-binding domain-containing protein 1 (lysmd1) from Xenopus laevis (African clawed frog).